The primary structure comprises 314 residues: tRNA pseudouridine synthase B (314 aa).

His43 serves as a coordination point for substrate. Asp48 (nucleophile) is an active-site residue. 3 residues coordinate substrate: Tyr76, Tyr179, and Leu200.

Belongs to the pseudouridine synthase TruB family. Type 1 subfamily.

It catalyses the reaction uridine(55) in tRNA = pseudouridine(55) in tRNA. Responsible for synthesis of pseudouridine from uracil-55 in the psi GC loop of transfer RNAs. The protein is tRNA pseudouridine synthase B of Cronobacter sakazakii (strain ATCC BAA-894) (Enterobacter sakazakii).